Consider the following 601-residue polypeptide: Uptake hydrogenase large subunit (601 aa).

Ni(2+)-binding residues include Cys-74, Cys-77, Cys-580, and Cys-583.

Belongs to the [NiFe]/[NiFeSe] hydrogenase large subunit family. As to quaternary structure, heterodimer of a large and a small subunit. The cofactor is Ni(2+).

It is found in the cell membrane. The catalysed reaction is H2 + A = AH2. In terms of biological role, this enzyme recycles the H(2) produced by nitrogenase to increase the production of ATP and to protect nitrogenase against inhibition or damage by O(2) under carbon- or phosphate-limited conditions. The sequence is that of Uptake hydrogenase large subunit (hupL) from Azotobacter chroococcum mcd 1.